We begin with the raw amino-acid sequence, 518 residues long: GMP synthase [glutamine-hydrolyzing] (518 aa).

Residues 11–203 (KIIVLDFGSQ…AFDVCQARSN (193 aa)) form the Glutamine amidotransferase type-1 domain. Catalysis depends on C88, which acts as the Nucleophile. Catalysis depends on residues H177 and E179. Residues 204–393 (WSMDDFIDMQ…LGMPHELVWR (190 aa)) form the GMPS ATP-PPase domain. Residue 231–237 (SGGVDSS) coordinates ATP.

Homodimer.

The enzyme catalyses XMP + L-glutamine + ATP + H2O = GMP + L-glutamate + AMP + diphosphate + 2 H(+). The protein operates within purine metabolism; GMP biosynthesis; GMP from XMP (L-Gln route): step 1/1. Catalyzes the synthesis of GMP from XMP. This is GMP synthase [glutamine-hydrolyzing] from Ligilactobacillus salivarius (strain UCC118) (Lactobacillus salivarius).